The chain runs to 325 residues: Transaldolase (325 aa).

Lysine 125 functions as the Schiff-base intermediate with substrate in the catalytic mechanism.

Belongs to the transaldolase family. Type 2 subfamily.

Its subcellular location is the cytoplasm. It catalyses the reaction D-sedoheptulose 7-phosphate + D-glyceraldehyde 3-phosphate = D-erythrose 4-phosphate + beta-D-fructose 6-phosphate. It functions in the pathway carbohydrate degradation; pentose phosphate pathway; D-glyceraldehyde 3-phosphate and beta-D-fructose 6-phosphate from D-ribose 5-phosphate and D-xylulose 5-phosphate (non-oxidative stage): step 2/3. Its function is as follows. Transaldolase is important for the balance of metabolites in the pentose-phosphate pathway. The sequence is that of Transaldolase (tal) from Campylobacter jejuni subsp. jejuni serotype O:2 (strain ATCC 700819 / NCTC 11168).